Reading from the N-terminus, the 391-residue chain is Arsenite methyltransferase (391 aa).

A disordered region spans residues 1 to 126; sequence MELWTHPTPA…TMVADRDPEE (126 aa). Residues 28-39 show a composition bias toward polar residues; it reads CSQPWATTPGTN. Residues 40–65 are compositionally biased toward low complexity; it reads SSDASRTPTTASASATSKPQSASARA. The span at 102-116 shows a compositional bias: polar residues; that stretch reads KRSTTCEATMSNDNE.

The protein belongs to the methyltransferase superfamily. Arsenite methyltransferase family.

It catalyses the reaction arsenic triglutathione + [thioredoxin]-dithiol + S-adenosyl-L-methionine + 2 H2O = methylarsonous acid + [thioredoxin]-disulfide + 3 glutathione + S-adenosyl-L-homocysteine + H(+). The catalysed reaction is arsenic triglutathione + 2 [thioredoxin]-dithiol + 2 S-adenosyl-L-methionine + H2O = dimethylarsinous acid + 2 [thioredoxin]-disulfide + 3 glutathione + 2 S-adenosyl-L-homocysteine + 2 H(+). The enzyme catalyses arsenic triglutathione + 3 [thioredoxin]-dithiol + 3 S-adenosyl-L-methionine = trimethylarsine + 3 [thioredoxin]-disulfide + 3 glutathione + 3 S-adenosyl-L-homocysteine + 3 H(+). Its function is as follows. Catalyzes the transfer of a methyl group from AdoMet to arsenite, producing methylated arsenicals. This is Arsenite methyltransferase from Halobacterium salinarum (strain ATCC 700922 / JCM 11081 / NRC-1) (Halobacterium halobium).